The primary structure comprises 219 residues: Translation initiation factor IF-3 (219 aa).

This sequence belongs to the IF-3 family. In terms of assembly, monomer.

It localises to the cytoplasm. Its function is as follows. IF-3 binds to the 30S ribosomal subunit and shifts the equilibrium between 70S ribosomes and their 50S and 30S subunits in favor of the free subunits, thus enhancing the availability of 30S subunits on which protein synthesis initiation begins. The polypeptide is Translation initiation factor IF-3 (Prochlorococcus marinus (strain MIT 9313)).